A 1486-amino-acid polypeptide reads, in one-letter code: Chromosome partition protein MukB (1486 aa).

ATP is bound at residue 34 to 41 (GGNGAGKS). Coiled-coil stretches lie at residues 326 to 418 (LEAD…QYNQ), 444 to 480 (LETF…QAYQ), and 509 to 603 (RHLA…RAPV). The segment at 666 to 783 (PGGSEDQRLN…EVPLFGRAAR (118 aa)) is flexible hinge. 3 coiled-coil regions span residues 835 to 923 (EAEI…AKLE), 977 to 1115 (EMLS…TAKA), and 1209 to 1266 (VEAI…QNVS).

It belongs to the SMC family. MukB subfamily. In terms of assembly, homodimerization via its hinge domain. Binds to DNA via its C-terminal region. Interacts, and probably forms a ternary complex, with MukE and MukF via its C-terminal region. The complex formation is stimulated by calcium or magnesium. Interacts with tubulin-related protein FtsZ.

The protein resides in the cytoplasm. It is found in the nucleoid. Plays a central role in chromosome condensation, segregation and cell cycle progression. Functions as a homodimer, which is essential for chromosome partition. Involved in negative DNA supercoiling in vivo, and by this means organize and compact chromosomes. May achieve or facilitate chromosome segregation by condensation DNA from both sides of a centrally located replisome during cell division. The polypeptide is Chromosome partition protein MukB (Escherichia coli (strain SMS-3-5 / SECEC)).